We begin with the raw amino-acid sequence, 1202 residues long: Ribonuclease P protein component, mitochondrial (1202 aa).

A mitochondrion-targeting transit peptide spans Met-1–Tyr-122. Residues Asn-109–Asp-134 are disordered. Over residues Gln-118–Asp-134 the composition is skewed to polar residues.

In terms of assembly, consists of an RNA moiety (RPM1) and the protein component (RPM2). Both are necessary for full enzymatic activity.

It localises to the mitochondrion. It carries out the reaction Endonucleolytic cleavage of RNA, removing 5'-extranucleotides from tRNA precursor.. Ribonuclease P generates mature tRNA molecules by cleaving their 5'-ends. The polypeptide is Ribonuclease P protein component, mitochondrial (RPM2) (Saccharomyces cerevisiae (strain ATCC 204508 / S288c) (Baker's yeast)).